The following is a 949-amino-acid chain: ATPase 6, plasma membrane-type (949 aa).

The Cytoplasmic segment spans residues 1–64 (MAADISWDEI…EKVENKFLKF (64 aa)). A helical transmembrane segment spans residues 65-84 (LGFMWNPLSWVMEAAAIMAI). Topologically, residues 85 to 96 (VLANGGGRPPDW) are extracellular. The helical transmembrane segment at 97 to 117 (QDFVGITCLLIINSTISFIEE) threads the bilayer. At 118 to 246 (NNAGNAAAAL…GHFQKVLTAI (129 aa)) the chain is on the cytoplasmic side. The helical transmembrane segment at 247-267 (GNFCICSIGIGMLIEIIIMYP) threads the bilayer. At 268 to 276 (IQHRKYRDG) the chain is on the extracellular side. A helical transmembrane segment spans residues 277 to 294 (IDNLLVLLIGGIPIAMPT). At 295–645 (VLSVTMAIGS…TSRAIFQRMK (351 aa)) the chain is on the cytoplasmic side. The active-site 4-aspartylphosphate intermediate is the aspartate 332. 2 residues coordinate Mg(2+): aspartate 590 and aspartate 594. Residues 646-667 (NYTIYAVSITIRIVLGFMLVAL) form a helical membrane-spanning segment. The Extracellular portion of the chain corresponds to 668 to 672 (IWEFD). Residues 673-695 (FSPFMVLIIAILNDGTIMTISKD) form a helical membrane-spanning segment. The Cytoplasmic portion of the chain corresponds to 696-711 (RVKPSPIPDSWKLKEI). The helical transmembrane segment at 712-732 (FATGVVLGTYMALVTVVFFWL) threads the bilayer. The Extracellular portion of the chain corresponds to 733 to 753 (AHDTTFFSDKFGVRSLQGKDE). The chain crosses the membrane as a helical span at residues 754–774 (ELIAVLYLQVSIISQALIFVT). Over 775-786 (RSRSWSFVERPG) the chain is Cytoplasmic. A helical membrane pass occupies residues 787–807 (LLLLIAFFVAQLIATLIATYA). The Extracellular portion of the chain corresponds to 808–815 (HWEFARIK). The helical transmembrane segment at 816–836 (GCGWGWCGVIWIYSIVTYIPL) threads the bilayer. At 837–949 (DILKFITRYT…IDNLNQHYTV (113 aa)) the chain is on the cytoplasmic side. Position 883 is a phosphothreonine (threonine 883). The residue at position 931 (serine 931) is a Phosphoserine. Residues 947-949 (YTV) form an interaction with 14-3-3 proteins region. Threonine 948 bears the Phosphothreonine mark.

The protein belongs to the cation transport ATPase (P-type) (TC 3.A.3) family. Type IIIA subfamily. As to quaternary structure, binds to 14-3-3 proteins. The binding is induced by phosphorylation of Thr-948. Binding to 14-3-3 proteins activates the H(+)-ATPase. Expressed in guard cells.

It is found in the membrane. The catalysed reaction is ATP + H2O + H(+)(in) = ADP + phosphate + 2 H(+)(out). Its function is as follows. The plasma membrane H(+) ATPase of plants and fungi generates a proton gradient that drives the active transport of nutrients by H(+)-symport. The resulting external acidification and/or internal alkinization may mediate growth responses. This Arabidopsis thaliana (Mouse-ear cress) protein is ATPase 6, plasma membrane-type (AHA6).